Reading from the N-terminus, the 53-residue chain is Metallocarboxypeptidase inhibitor (53 aa).

3 disulfide bridges follow: C9–C23, C15–C51, and C27–C38. Residue A53 participates in Zn(2+) binding.

In terms of assembly, monomer. Interacts (via C-terminus) with human CPA4.

In terms of biological role, metallocarboxypeptidase inhibitor. Has an inhibitory effect on bovine CPA1 and CPB2, human CPA1, CPA2, CPA4, CPB1 and CPB2, and porcine CPB1. Does not inhibit D.melanogaster svr (carboxypeptidase D). Shows no activity against serine proteases subtilisin or bovine trypsin, cysteine protease papain, and aspartyl protease porcine pepsin. This is Metallocarboxypeptidase inhibitor from Nerita versicolor (Four-tooth nerite).